The primary structure comprises 292 residues: Bifunctional protein FolD 1 (292 aa).

165 to 167 (GRS) lines the NADP(+) pocket.

This sequence belongs to the tetrahydrofolate dehydrogenase/cyclohydrolase family. As to quaternary structure, homodimer.

It catalyses the reaction (6R)-5,10-methylene-5,6,7,8-tetrahydrofolate + NADP(+) = (6R)-5,10-methenyltetrahydrofolate + NADPH. The enzyme catalyses (6R)-5,10-methenyltetrahydrofolate + H2O = (6R)-10-formyltetrahydrofolate + H(+). Its pathway is one-carbon metabolism; tetrahydrofolate interconversion. Its function is as follows. Catalyzes the oxidation of 5,10-methylenetetrahydrofolate to 5,10-methenyltetrahydrofolate and then the hydrolysis of 5,10-methenyltetrahydrofolate to 10-formyltetrahydrofolate. This Myxococcus xanthus (strain DK1622) protein is Bifunctional protein FolD 1.